The primary structure comprises 132 residues: Small ribosomal subunit protein uS8 (132 aa).

It belongs to the universal ribosomal protein uS8 family. As to quaternary structure, part of the 30S ribosomal subunit. Contacts proteins S5 and S12.

Functionally, one of the primary rRNA binding proteins, it binds directly to 16S rRNA central domain where it helps coordinate assembly of the platform of the 30S subunit. In Desulfitobacterium hafniense (strain DSM 10664 / DCB-2), this protein is Small ribosomal subunit protein uS8.